A 217-amino-acid chain; its full sequence is Large ribosomal subunit protein eL6 (217 aa).

The protein belongs to the eukaryotic ribosomal protein eL6 family. In terms of assembly, component of the large ribosomal subunit. May bind IPO9 with low affinity.

Its subcellular location is the cytoplasm. It localises to the cytosol. The protein resides in the rough endoplasmic reticulum. Functionally, component of the large ribosomal subunit. This Caenorhabditis elegans protein is Large ribosomal subunit protein eL6 (rpl-6).